Here is a 1301-residue protein sequence, read N- to C-terminus: ABC transporter BEA3 (1301 aa).

Positions 1–30 are disordered; it reads MGKRTAENSAANGEGEEKHPEIGVDGRPEK. Residues 15 to 30 are compositionally biased toward basic and acidic residues; it reads GEEKHPEIGVDGRPEK. The next 4 membrane-spanning stretches (helical) occupy residues 54–74, 103–123, 177–197, and 203–223; these read VGVIASIGVGITLPLLNIVFG, LYLLGLFLGRLVLGYITNFAF, LGVFVEYNATMIASIIVAFIY, and LVTFTAVVFITFSVSLVLPYI. The ABC transmembrane type-1 1 domain maps to 54 to 345; that stretch reads VGVIASIGVG…ISTPLLAVSK (292 aa). Residue Asn-229 is glycosylated (N-linked (GlcNAc...) asparagine). 2 consecutive transmembrane segments (helical) span residues 281 to 301 and 313 to 333; these read FIALQYGLVFFSSYAAFGLAF and INQLGAIIVVLFSVMMIVTAM. Residues 378–667 enclose the ABC transporter 1 domain; it reads IILEDVTFAY…EAGLYYNLVN (290 aa). Residue 413 to 420 coordinates ATP; sequence GPSGSGKS. Residues 442–454 are compositionally biased toward basic and acidic residues; the sequence is VEKPTDKKNNGGK. Positions 442-461 are disordered; it reads VEKPTDKKNNGGKEEDEQEL. Residues Asn-511 and Asn-618 are each glycosylated (N-linked (GlcNAc...) asparagine). Residues 682–708 are disordered; that stretch reads VIAKEERPSSVHEKAHTESTIEEKPLE. Positions 735–1024 constitute an ABC transmembrane type-1 2 domain; sequence ALTLFFSACA…ALSFGPNVAQ (290 aa). 6 consecutive transmembrane segments (helical) span residues 745-765, 779-799, 858-878, 880-900, 961-981, and 987-1007; these read GAAVPFQAWLFAKVIIVFGYL, SLMWTVLAISAGLAYCATFFL, SVFIALWTLMGTIAIALAFAW, LALVSLCVVVPILLAAGYWRM, WVSLLYAFSDSATIGCQAIVL, and LLLSGEYDLESFFVCFMSVLN. An ABC transporter 2 domain is found at 1060-1296; that stretch reads IELENIYFKY…RGVYWQMCQS (237 aa). Residue 1094 to 1101 participates in ATP binding; it reads GASGSGKS.

The protein belongs to the ABC transporter superfamily. ABCB family. Multidrug resistance exporter (TC 3.A.1.201) subfamily.

The protein localises to the cell membrane. Functionally, ABC transporter; part of the gene cluster that mediates the biosynthesis of beauvericin (BEA), a non-ribosomal cyclic hexadepsipeptide that shows antibiotic, antifungal, insecticidal, and cancer cell antiproliferative and antihaptotactic activity. Functions as a regulator of beauvericin production, rather than in BEA transport out of the cell. Beauvericin has low toxicity to the producing fungus and BEA3 does not play a role in detoxification and self-protection of the producing fungus. The sequence is that of ABC transporter BEA3 from Gibberella fujikuroi (strain CBS 195.34 / IMI 58289 / NRRL A-6831) (Bakanae and foot rot disease fungus).